A 651-amino-acid polypeptide reads, in one-letter code: Acetyl-coenzyme A synthetase 1 (651 aa).

CoA is bound by residues arginine 191 to lysine 194, threonine 311, and asparagine 335. Residues glycine 387 to proline 389, aspartate 411 to threonine 416, aspartate 500, and arginine 515 contribute to the ATP site. CoA is bound at residue serine 523. Arginine 526 is a binding site for ATP. The Mg(2+) site is built by valine 537, histidine 539, and valine 542. Arginine 584 provides a ligand contact to CoA. Lysine 609 is subject to N6-acetyllysine.

This sequence belongs to the ATP-dependent AMP-binding enzyme family. Mg(2+) serves as cofactor. In terms of processing, acetylated. Deacetylation by the SIR2-homolog deacetylase activates the enzyme.

The catalysed reaction is acetate + ATP + CoA = acetyl-CoA + AMP + diphosphate. Functionally, catalyzes the conversion of acetate into acetyl-CoA (AcCoA), an essential intermediate at the junction of anabolic and catabolic pathways. AcsA undergoes a two-step reaction. In the first half reaction, AcsA combines acetate with ATP to form acetyl-adenylate (AcAMP) intermediate. In the second half reaction, it can then transfer the acetyl group from AcAMP to the sulfhydryl group of CoA, forming the product AcCoA. The protein is Acetyl-coenzyme A synthetase 1 of Pseudomonas aeruginosa (strain ATCC 15692 / DSM 22644 / CIP 104116 / JCM 14847 / LMG 12228 / 1C / PRS 101 / PAO1).